The chain runs to 565 residues: MTENNQHLKQDWTRHREGVVRAARGTQLTAKSWLTEAPLRMLMNNLDPEVAENPNELVVYGGIGRAARNWECYDKIVESLTQLNDDETLLVQSGKPVGVFKTHSNAPRVLIANSNLVPHWASWEHFNELDAKGLAMYGQMTAGSWIYIGSQGIVQGTYETFVEAGRQHYDGNLKGRWVLTAGLGGMGGAQPLAATLAGACSLNIECQQSRIDFRIKTRYVDEQAADLDDALARIAKYTAEGKAISIALCGNAAEILPEMVRRGVRPDMVTDQTSAHDPLNGYLPKGWTWDEYRARSVSEPASVVKAAKQSMAEHVEAMLAFQQAGIPTFDYGNNIRQMAKEVGVTNAFDFPGFVPAYIRPLFCRGIGPFRWAALSGDPQDIYKTDAKVKELIPDDEHLHNWLDMARERISFQGLPARICWVGLGQRARLGLAFNEMVRSGELSAPVVIGRDHLDSGSVASPNRETESMRDGSDAVSDWPLLNALLNTASGATWVSLHHGGGVGMGFSQHSGMVIVCDGTDEAAERIARVLHNDPATGVMRHADAGYDIAIDCAREQGLNLPMIGR.

Residues 61–62 (GG), glutamine 139, 185–187 (GMG), glutamate 205, arginine 210, 251–252 (NA), 272–276 (QTSAH), 282–283 (YL), and tyrosine 331 each bind NAD(+). Cysteine 419 is an active-site residue. Positions 453-472 (LDSGSVASPNRETESMRDGS) are disordered. Residues 463–472 (RETESMRDGS) are compositionally biased toward basic and acidic residues. Glycine 501 is a binding site for NAD(+).

It belongs to the urocanase family. It depends on NAD(+) as a cofactor.

It is found in the cytoplasm. It carries out the reaction 4-imidazolone-5-propanoate = trans-urocanate + H2O. Its pathway is amino-acid degradation; L-histidine degradation into L-glutamate; N-formimidoyl-L-glutamate from L-histidine: step 2/3. Functionally, catalyzes the conversion of urocanate to 4-imidazolone-5-propionate. The polypeptide is Urocanate hydratase (Pseudomonas syringae pv. syringae (strain B728a)).